Consider the following 81-residue polypeptide: UPF0298 protein SAK_1599 (81 aa).

This sequence belongs to the UPF0298 family.

The protein localises to the cytoplasm. The polypeptide is UPF0298 protein SAK_1599 (Streptococcus agalactiae serotype Ia (strain ATCC 27591 / A909 / CDC SS700)).